The sequence spans 398 residues: MSKDPKGYYKVLELSPGASVAEVRKAYAKQQAKYHLDSPYMKNKLKNAASDEEREKIKKECGEMSARLNSAKSVLFDEKKKKEYDSGMGEFGAHFSGGGYSDIFDIFSQFTGGRGHQRTNKVSSTKYVITVSLRESFVGKVSKFNVRTEKVCTTCDGKGGKDVETCKKCNGNGVYTSRRSLGGFVTLAETRCDGCDGSGHKIKGKPCSTCNGAEYIQDKTMFEVNIKPGVRKGEKIVFEGMGDQRRGHVPGDVIFIIDVQEDSRFERCGNDLVGNIDIPLYTAIGGGVVYFTHIDGRQLEINVSPFRTFDTALKIRNEGFKGSRTGNLILKPNIIIGSESDRAKIMQVLSAPSKKPYGTFTKVNSEFGSMPEPERDHEDASEEGAQSARSFFNNFSFF.

A J domain is found at 7–88; it reads GYYKVLELSP…KKKKEYDSGM (82 aa). The segment at 139–219 adopts a CR-type zinc-finger fold; sequence GKVSKFNVRT…CNGAEYIQDK (81 aa). A substrate-binding site is contributed by 144–146; sequence FNV. The Zn(2+) site is built by Cys152, Cys155, Cys166, Cys169, Cys192, Cys195, Cys207, and Cys210. 4 CXXCXGXG motif repeats span residues 152–159, 166–173, 192–199, and 207–214; these read CTTCDGKG, CKKCNGNG, CDGCDGSG, and CSTCNGAE. Substrate-binding positions include 221-222 and 253-255; these read MF and VIF. The interval 367–386 is disordered; that stretch reads FGSMPEPERDHEDASEEGAQ.

It belongs to the DnaJ family. As to quaternary structure, homodimer. Requires Zn(2+) as cofactor.

It localises to the cytoplasm. Probably involved in mitosomal protein import. In Encephalitozoon cuniculi (strain GB-M1) (Microsporidian parasite), this protein is Mitochondrial protein import protein mas5 (MAS5).